We begin with the raw amino-acid sequence, 462 residues long: uncharacterized protein (462 aa).

7 WD repeats span residues 170–209 (GGER…EVQL), 212–260 (GHTD…PLLR), 263–302 (GHLA…ELLM), 305–344 (GHSE…SIMV), 347–386 (EHIR…LAHT), 389–430 (AHSS…LIKS), and 433–462 (GHEE…LWYP).

The protein localises to the cytoplasm. This is an uncharacterized protein from Schizosaccharomyces pombe (strain 972 / ATCC 24843) (Fission yeast).